A 161-amino-acid polypeptide reads, in one-letter code: Cytochrome b6-f complex subunit 4 (161 aa).

A run of 3 helical transmembrane segments spans residues 37 to 57 (LLYI…GLAV), 96 to 116 (LLGV…PFIE), and 132 to 152 (SVFL…TLPI).

This sequence belongs to the cytochrome b family. PetD subfamily. The 4 large subunits of the cytochrome b6-f complex are cytochrome b6, subunit IV (17 kDa polypeptide, PetD), cytochrome f and the Rieske protein, while the 4 small subunits are PetG, PetL, PetM and PetN. The complex functions as a dimer.

The protein resides in the cellular thylakoid membrane. In terms of biological role, component of the cytochrome b6-f complex, which mediates electron transfer between photosystem II (PSII) and photosystem I (PSI), cyclic electron flow around PSI, and state transitions. The sequence is that of Cytochrome b6-f complex subunit 4 from Acaryochloris marina (strain MBIC 11017).